A 591-amino-acid polypeptide reads, in one-letter code: NADH-quinone oxidoreductase subunit C/D (591 aa).

Residues 1 to 182 are NADH dehydrogenase I subunit C; it reads MVTVVENTDP…TPYFLNTAKQ (182 aa). Residues 206 to 591 form an NADH dehydrogenase I subunit D region; sequence DFMFLNIGPN…IDIVMADCDR (386 aa).

This sequence in the N-terminal section; belongs to the complex I 30 kDa subunit family. The protein in the C-terminal section; belongs to the complex I 49 kDa subunit family. As to quaternary structure, NDH-1 is composed of 13 different subunits. Subunits NuoB, CD, E, F, and G constitute the peripheral sector of the complex.

The protein resides in the cell inner membrane. It carries out the reaction a quinone + NADH + 5 H(+)(in) = a quinol + NAD(+) + 4 H(+)(out). Functionally, NDH-1 shuttles electrons from NADH, via FMN and iron-sulfur (Fe-S) centers, to quinones in the respiratory chain. The immediate electron acceptor for the enzyme in this species is believed to be ubiquinone. Couples the redox reaction to proton translocation (for every two electrons transferred, four hydrogen ions are translocated across the cytoplasmic membrane), and thus conserves the redox energy in a proton gradient. In Psychrobacter cryohalolentis (strain ATCC BAA-1226 / DSM 17306 / VKM B-2378 / K5), this protein is NADH-quinone oxidoreductase subunit C/D.